Here is a 163-residue protein sequence, read N- to C-terminus: ADP-ribosylation factor-like protein 2-binding protein (163 aa).

The protein belongs to the ARL2BP family. As to quaternary structure, interacts with GTP bound ARL2 and ARL3; the complex ARL2-ARL2BP as well as ARL2BP alone, binds to SLC25A4/ANT1. Interaction with ARL2 may be required for cilia basal body localization. Interacts with STAT3; interaction is enhanced with ARL2. Found in a complex with ARL2BP, ARL2 and SLC25A6. Found in a complex with ARL2, ARL2BP and SLC25A4. Interacts with STAT2, STAT3 and STAT4.

It localises to the cytoplasm. Its subcellular location is the mitochondrion intermembrane space. The protein localises to the cytoskeleton. It is found in the microtubule organizing center. The protein resides in the centrosome. It localises to the nucleus. Its subcellular location is the spindle. The protein localises to the cilium basal body. Functionally, together with ARL2, plays a role in the nuclear translocation, retention and transcriptional activity of STAT3. May play a role as an effector of ARL2. This is ADP-ribosylation factor-like protein 2-binding protein (ARL2BP) from Pongo abelii (Sumatran orangutan).